The chain runs to 395 residues: Elongation factor Tu (395 aa).

The tr-type G domain occupies 10–204; it reads KPHVNIGTIG…EVDAYIPTPE (195 aa). A G1 region spans residues 19 to 26; it reads GHVDHGKT. 19 to 26 contributes to the GTP binding site; it reads GHVDHGKT. Thr-26 serves as a coordination point for Mg(2+). Residues 60–64 are G2; that stretch reads GITIS. Residues 81–84 form a G3 region; the sequence is DCPG. GTP is bound by residues 81 to 85 and 136 to 139; these read DCPGH and NKCD. A G4 region spans residues 136–139; that stretch reads NKCD. Positions 174–176 are G5; it reads SAL.

The protein belongs to the TRAFAC class translation factor GTPase superfamily. Classic translation factor GTPase family. EF-Tu/EF-1A subfamily. In terms of assembly, monomer.

It is found in the cytoplasm. It catalyses the reaction GTP + H2O = GDP + phosphate + H(+). Its function is as follows. GTP hydrolase that promotes the GTP-dependent binding of aminoacyl-tRNA to the A-site of ribosomes during protein biosynthesis. The sequence is that of Elongation factor Tu from Bacillus cereus (strain ATCC 10987 / NRS 248).